The following is a 242-amino-acid chain: uncharacterized protein (242 aa).

The region spanning 8–76 is the HTH gntR-type domain; sequence TPLYIQLKQI…QGKGTFVKSP (69 aa). Positions 36-55 form a DNA-binding region, H-T-H motif; the sequence is ENELCTKYNVSRITVRKAIL.

This is an uncharacterized protein from Bacillus subtilis (strain 168).